The following is a 446-amino-acid chain: ATP-dependent protease ATPase subunit HslU (446 aa).

Residues valine 18, 60 to 65, aspartate 259, glutamate 324, and arginine 396 each bind ATP; that span reads GVGKTE.

Belongs to the ClpX chaperone family. HslU subfamily. As to quaternary structure, a double ring-shaped homohexamer of HslV is capped on each side by a ring-shaped HslU homohexamer. The assembly of the HslU/HslV complex is dependent on binding of ATP.

The protein resides in the cytoplasm. Functionally, ATPase subunit of a proteasome-like degradation complex; this subunit has chaperone activity. The binding of ATP and its subsequent hydrolysis by HslU are essential for unfolding of protein substrates subsequently hydrolyzed by HslV. HslU recognizes the N-terminal part of its protein substrates and unfolds these before they are guided to HslV for hydrolysis. This Dechloromonas aromatica (strain RCB) protein is ATP-dependent protease ATPase subunit HslU.